Reading from the N-terminus, the 400-residue chain is MRSLIAMYQRIGLVPLIIIGLVLGVLIGWLAPNVGIALGLLGTLFVGALKAVAPILVFVLVMAAISQHRSGNEVYVKPVLIMYMFGTFLAALTAVGASFLFPTELVLVNAVIEQVPPANLKEVLTNLLMNLVANPVQAIAEANYIGILAWAIIIGFALRQASDTARTVVGDFSDAISQVVKWVIALAPFGILGLVANTVAETGFEALAGYARILMVLVGCMLFIALVVNPLIILVKTGKNPYPLVFICLRESGITAFFTRSSAANIPVNMNLARKLGLHEDTYSVTIPLGATINMAGAAITINVLTLAAAHTLGIEVTFASALLLSLVATISACGASGVAGGSLLLIPLAASLFSIPNDIAMQVVAIGFIIGVIQDSAETALNSSTDVLFTAAADPKYAR.

The next 10 helical transmembrane spans lie at 11-31 (IGLV…GWLA), 45-65 (FVGA…MAAI), 81-101 (IMYM…SFLF), 138-158 (AIAE…GFAL), 175-195 (AISQ…LGLV), 213-233 (ILMV…PLII), 242-264 (YPLV…SSAA), 295-315 (MAGA…TLGI), 327-347 (LVAT…LLLI), and 354-374 (FSIP…IGVI).

It belongs to the dicarboxylate/amino acid:cation symporter (DAACS) (TC 2.A.23) family.

Its subcellular location is the cell inner membrane. It catalyses the reaction L-serine(in) + Na(+)(in) = L-serine(out) + Na(+)(out). It carries out the reaction L-threonine(in) + Na(+)(in) = L-threonine(out) + Na(+)(out). Involved in the import of serine and threonine into the cell, with the concomitant import of sodium (symport system). The sequence is that of Serine/threonine transporter SstT from Psychrobacter cryohalolentis (strain ATCC BAA-1226 / DSM 17306 / VKM B-2378 / K5).